A 119-amino-acid chain; its full sequence is MNRIAFVFTHGPHGDAAGREGLDALLATSALAEDIGVFFIADGVLLLLEQQQPAQILARDFVATFGVLSLYDVDSLYLCAESAAERGLDADAGWVLNAEWLSAADWRQRLSAYDTVMTF.

The protein belongs to the DsrF/TusC family. As to quaternary structure, heterohexamer, formed by a dimer of trimers. The hexameric TusBCD complex contains 2 copies each of TusB, TusC and TusD. The TusBCD complex interacts with TusE.

It is found in the cytoplasm. Its function is as follows. Part of a sulfur-relay system required for 2-thiolation of 5-methylaminomethyl-2-thiouridine (mnm(5)s(2)U) at tRNA wobble positions. The protein is Protein TusC of Sodalis glossinidius (strain morsitans).